The sequence spans 341 residues: tRNA uridine(34) hydroxylase (341 aa).

The Rhodanese domain occupies 139–233; that stretch reads SDPEVVLVDT…YLEEVPSTET (95 aa). Cysteine 193 serves as the catalytic Cysteine persulfide intermediate. Composition is skewed to basic and acidic residues over residues 306–316 and 324–341; these read SLAEERGESHI and IEER…QANK. Residues 306-341 are disordered; sequence SLAEERGESHIGGDIQNIIEERRQEKNDKKAKQANK.

This sequence belongs to the TrhO family.

It carries out the reaction uridine(34) in tRNA + AH2 + O2 = 5-hydroxyuridine(34) in tRNA + A + H2O. Catalyzes oxygen-dependent 5-hydroxyuridine (ho5U) modification at position 34 in tRNAs. The protein is tRNA uridine(34) hydroxylase of Colwellia psychrerythraea (strain 34H / ATCC BAA-681) (Vibrio psychroerythus).